The sequence spans 496 residues: Glycerol kinase (496 aa).

Thr-12 is an ADP binding site. The ATP site is built by Thr-12, Thr-13, and Ser-14. Thr-12 serves as a coordination point for sn-glycerol 3-phosphate. Residue Arg-16 coordinates ADP. Residues Arg-82, Glu-83, and Tyr-134 each coordinate sn-glycerol 3-phosphate. Residues Arg-82, Glu-83, and Tyr-134 each coordinate glycerol. The residue at position 230 (His-230) is a Phosphohistidine; by HPr. Asp-244 serves as a coordination point for sn-glycerol 3-phosphate. Positions 244 and 245 each coordinate glycerol. Residues Thr-266 and Gly-309 each coordinate ADP. Residues Thr-266, Gly-309, Gln-313, and Gly-410 each contribute to the ATP site. ADP is bound by residues Gly-410 and Asn-414.

The protein belongs to the FGGY kinase family. As to quaternary structure, homotetramer and homodimer (in equilibrium). Post-translationally, the phosphoenolpyruvate-dependent sugar phosphotransferase system (PTS), including enzyme I, and histidine-containing protein (HPr) are required for the phosphorylation, which leads to the activation of the enzyme.

The catalysed reaction is glycerol + ATP = sn-glycerol 3-phosphate + ADP + H(+). Its pathway is polyol metabolism; glycerol degradation via glycerol kinase pathway; sn-glycerol 3-phosphate from glycerol: step 1/1. With respect to regulation, activated by phosphorylation and inhibited by fructose 1,6-bisphosphate (FBP). Its function is as follows. Key enzyme in the regulation of glycerol uptake and metabolism. Catalyzes the phosphorylation of glycerol to yield sn-glycerol 3-phosphate. The sequence is that of Glycerol kinase from Geobacillus sp. (strain WCH70).